The chain runs to 460 residues: L-seryl-tRNA(Sec) selenium transferase (460 aa).

N6-(pyridoxal phosphate)lysine is present on Lys-293.

Belongs to the SelA family. Pyridoxal 5'-phosphate is required as a cofactor.

The protein localises to the cytoplasm. The catalysed reaction is L-seryl-tRNA(Sec) + selenophosphate + H(+) = L-selenocysteinyl-tRNA(Sec) + phosphate. Its pathway is aminoacyl-tRNA biosynthesis; selenocysteinyl-tRNA(Sec) biosynthesis; selenocysteinyl-tRNA(Sec) from L-seryl-tRNA(Sec) (bacterial route): step 1/1. Converts seryl-tRNA(Sec) to selenocysteinyl-tRNA(Sec) required for selenoprotein biosynthesis. This chain is L-seryl-tRNA(Sec) selenium transferase, found in Pasteurella multocida (strain Pm70).